The chain runs to 177 residues: Large ribosomal subunit protein uL6 (177 aa).

It belongs to the universal ribosomal protein uL6 family. As to quaternary structure, part of the 50S ribosomal subunit.

This protein binds to the 23S rRNA, and is important in its secondary structure. It is located near the subunit interface in the base of the L7/L12 stalk, and near the tRNA binding site of the peptidyltransferase center. This is Large ribosomal subunit protein uL6 from Pseudoalteromonas atlantica (strain T6c / ATCC BAA-1087).